Consider the following 614-residue polypeptide: 1-deoxy-D-xylulose-5-phosphate synthase (614 aa).

Residues His74 and 115–117 (AHS) each bind thiamine diphosphate. Asp146 contacts Mg(2+). Thiamine diphosphate contacts are provided by residues 147–148 (GA), Asn175, Tyr282, and Glu363. Asn175 is a binding site for Mg(2+).

This sequence belongs to the transketolase family. DXPS subfamily. In terms of assembly, homodimer. Requires Mg(2+) as cofactor. Thiamine diphosphate is required as a cofactor.

The enzyme catalyses D-glyceraldehyde 3-phosphate + pyruvate + H(+) = 1-deoxy-D-xylulose 5-phosphate + CO2. It participates in metabolic intermediate biosynthesis; 1-deoxy-D-xylulose 5-phosphate biosynthesis; 1-deoxy-D-xylulose 5-phosphate from D-glyceraldehyde 3-phosphate and pyruvate: step 1/1. Catalyzes the acyloin condensation reaction between C atoms 2 and 3 of pyruvate and glyceraldehyde 3-phosphate to yield 1-deoxy-D-xylulose-5-phosphate (DXP). This Nitrosomonas europaea (strain ATCC 19718 / CIP 103999 / KCTC 2705 / NBRC 14298) protein is 1-deoxy-D-xylulose-5-phosphate synthase.